A 356-amino-acid polypeptide reads, in one-letter code: Kelch domain-containing protein VC_1773 (356 aa).

Kelch repeat units lie at residues 72 to 125, 163 to 210, 288 to 331, and 333 to 355; these read KLYV…SLSP, TIFM…HKNN, NLYA…ASNG, and AMYVLGGENSNGDAMTRCLSLLM.

In Vibrio cholerae serotype O1 (strain ATCC 39315 / El Tor Inaba N16961), this protein is Kelch domain-containing protein VC_1773.